Reading from the N-terminus, the 384-residue chain is MEEQDILNELRKYRSQDLKYEEGYILGSMCTKPHPIARKISEMFFETNLGDPGLFNGTSKLEKEVVSMLGSILHNNNAFGYIISGGTEANLTAMRAFKNISKSKDKKQNIIIPETAHFSFDKARDMMDLNVVRPPLTEYFTMDVKFIRDYVEDSKNEISGIVGIAGCTELGSIDNIYELSKIAVENDILLHVDAAFGGFVIPFLDDKYKLKGYNYDFDFSLNGVSSITIDPHKMGLAPISAGGILFRDNTFKKYLDVDAPYLTEKQQATLIGTRSGVGVASTWGIMKLLGIEGYENLVNESMEKTKHLVKKAREYGFETAIDPVMNIVALKDENKQDTCMKLREENWYVSVCRCVEALRIVVMPHLEIEHIDGFLESLSNTKKY.

Lysine 233 carries the post-translational modification N6-(pyridoxal phosphate)lysine.

Belongs to the group II decarboxylase family. MfnA subfamily. It depends on pyridoxal 5'-phosphate as a cofactor.

It catalyses the reaction L-tyrosine + H(+) = tyramine + CO2. The catalysed reaction is L-aspartate + H(+) = beta-alanine + CO2. The protein operates within cofactor biosynthesis; methanofuran biosynthesis. Its pathway is cofactor biosynthesis; coenzyme A biosynthesis. Its function is as follows. Catalyzes the decarboxylation of L-tyrosine to produce tyramine for methanofuran biosynthesis. Can also catalyze the decarboxylation of L-aspartate to produce beta-alanine for coenzyme A (CoA) biosynthesis. The sequence is that of Probable L-tyrosine/L-aspartate decarboxylase from Methanococcus maripaludis (strain C5 / ATCC BAA-1333).